The chain runs to 218 residues: Octanoyltransferase (218 aa).

The BPL/LPL catalytic domain maps to 31-206 (REAADEVWLV…QLVKHLDYAE (176 aa)). Residues 70–77 (RGGQVTYH), 137–139 (SLG), and 150–152 (GLA) each bind substrate. Cys168 acts as the Acyl-thioester intermediate in catalysis.

This sequence belongs to the LipB family.

The protein localises to the cytoplasm. It catalyses the reaction octanoyl-[ACP] + L-lysyl-[protein] = N(6)-octanoyl-L-lysyl-[protein] + holo-[ACP] + H(+). It functions in the pathway protein modification; protein lipoylation via endogenous pathway; protein N(6)-(lipoyl)lysine from octanoyl-[acyl-carrier-protein]: step 1/2. Its function is as follows. Catalyzes the transfer of endogenously produced octanoic acid from octanoyl-acyl-carrier-protein onto the lipoyl domains of lipoate-dependent enzymes. Lipoyl-ACP can also act as a substrate although octanoyl-ACP is likely to be the physiological substrate. The chain is Octanoyltransferase from Pseudomonas savastanoi pv. phaseolicola (strain 1448A / Race 6) (Pseudomonas syringae pv. phaseolicola (strain 1448A / Race 6)).